A 563-amino-acid chain; its full sequence is Arginine--tRNA ligase (563 aa).

Positions 121–131 (PNIAKPFSIGH) match the 'HIGH' region motif.

It belongs to the class-I aminoacyl-tRNA synthetase family. As to quaternary structure, monomer.

Its subcellular location is the cytoplasm. It carries out the reaction tRNA(Arg) + L-arginine + ATP = L-arginyl-tRNA(Arg) + AMP + diphosphate. In Streptococcus thermophilus (strain ATCC BAA-250 / LMG 18311), this protein is Arginine--tRNA ligase.